A 368-amino-acid polypeptide reads, in one-letter code: 3-dehydroquinate synthase (368 aa).

NAD(+)-binding positions include glycine 112–aspartate 116, threonine 136–threonine 137, lysine 149, lysine 158, and threonine 176–threonine 179. Zn(2+) contacts are provided by glutamate 191, histidine 256, and histidine 273.

This sequence belongs to the sugar phosphate cyclases superfamily. Dehydroquinate synthase family. Co(2+) serves as cofactor. The cofactor is Zn(2+). Requires NAD(+) as cofactor.

The protein localises to the cytoplasm. It catalyses the reaction 7-phospho-2-dehydro-3-deoxy-D-arabino-heptonate = 3-dehydroquinate + phosphate. Its pathway is metabolic intermediate biosynthesis; chorismate biosynthesis; chorismate from D-erythrose 4-phosphate and phosphoenolpyruvate: step 2/7. In terms of biological role, catalyzes the conversion of 3-deoxy-D-arabino-heptulosonate 7-phosphate (DAHP) to dehydroquinate (DHQ). The polypeptide is 3-dehydroquinate synthase (Prochlorococcus marinus (strain NATL2A)).